A 339-amino-acid polypeptide reads, in one-letter code: MVREEVAGSTQTLQWKCVESRVDSKRLYYGRFILSPLRKGQADTVGIALRRALLGEIEGTCITRAKFGSVPHEYSTIAGIEESVQEILLNLKEIVLRSNLYGVRDASICVKGPRYITAQDIILPPSVEIVDTAQPIANLTEPIDFCIDLQIKRDRGYQTELRKNYQDGSYPIDAVSMPVRNVNYSIFSCGNGNEKHEILFLEIWTNGSLTPKEALYEASRNLIDLFLPFLHAEEEGASFEENKNRFTPPLFTFQKRLTNLKKNKKGIPLNCIFIDQLELTSRTYNCLKRANIHTLLDLLSKTEEDLLRIDSFRMEDRKHIWDTLEKHLPIDLLKNKLSF.

An alpha N-terminal domain (alpha-NTD) region spans residues Met1–Glu233. The interval Gly266–Phe339 is alpha C-terminal domain (alpha-CTD).

The protein belongs to the RNA polymerase alpha chain family. In terms of assembly, in plastids the minimal PEP RNA polymerase catalytic core is composed of four subunits: alpha, beta, beta', and beta''. When a (nuclear-encoded) sigma factor is associated with the core the holoenzyme is formed, which can initiate transcription.

The protein resides in the plastid. It is found in the chloroplast. The catalysed reaction is RNA(n) + a ribonucleoside 5'-triphosphate = RNA(n+1) + diphosphate. Its function is as follows. DNA-dependent RNA polymerase catalyzes the transcription of DNA into RNA using the four ribonucleoside triphosphates as substrates. In Aegilops speltoides (Goatgrass), this protein is DNA-directed RNA polymerase subunit alpha.